The chain runs to 130 residues: Hydrogenase maturation factor HypA (130 aa).

H2 contributes to the Ni(2+) binding site. Residues C74, C77, C90, and C93 each contribute to the Zn(2+) site.

This sequence belongs to the HypA/HybF family.

In terms of biological role, involved in the maturation of [NiFe] hydrogenases. Required for nickel insertion into the metal center of the hydrogenase. This is Hydrogenase maturation factor HypA from Desulfatibacillum aliphaticivorans.